The chain runs to 216 residues: Adenylate kinase (216 aa).

10 to 15 contributes to the ATP binding site; the sequence is GAGKGT. The interval 30–59 is NMP; the sequence is STGDIFRAHMSQGTPLGKLAKEYVDAGKYV. AMP contacts are provided by residues Thr-31, Arg-36, 57–59, 85–88, and Gln-92; these read KYV and GYPR. Residues 126–163 are LID; it reads GRRVCRSCGATYHVRFNPPREAGRCDRCGGELYQRSDD. Arg-127 lines the ATP pocket. Residues Cys-130 and Cys-133 each coordinate Zn(2+). Residue 136 to 137 participates in ATP binding; it reads TY. Zn(2+) is bound by residues Cys-150 and Cys-153. AMP-binding residues include Arg-160 and Arg-171. Gln-199 is a binding site for ATP.

This sequence belongs to the adenylate kinase family. Monomer.

The protein resides in the cytoplasm. It catalyses the reaction AMP + ATP = 2 ADP. It participates in purine metabolism; AMP biosynthesis via salvage pathway; AMP from ADP: step 1/1. Functionally, catalyzes the reversible transfer of the terminal phosphate group between ATP and AMP. Plays an important role in cellular energy homeostasis and in adenine nucleotide metabolism. This is Adenylate kinase from Symbiobacterium thermophilum (strain DSM 24528 / JCM 14929 / IAM 14863 / T).